Here is a 216-residue protein sequence, read N- to C-terminus: Ethylene-responsive transcription factor ERF016 (216 aa).

The segment at residues 6-63 is a DNA-binding region (AP2/ERF); that stretch reads KYTGVRKRKWGKWVAEIRLPNSRDRIWLGSFDSAEKAARAFDAALYCLRGPGARFNFP. Residues 121 to 145 are disordered; it reads EINSGSGGPTLGQVGEDNNNEGNSN. Over residues 135 to 145 the composition is skewed to low complexity; that stretch reads GEDNNNEGNSN.

Belongs to the AP2/ERF transcription factor family. ERF subfamily.

The protein localises to the nucleus. Probably acts as a transcriptional activator. Binds to the GCC-box pathogenesis-related promoter element. May be involved in the regulation of gene expression by stress factors and by components of stress signal transduction pathways. The sequence is that of Ethylene-responsive transcription factor ERF016 (ERF016) from Arabidopsis thaliana (Mouse-ear cress).